Reading from the N-terminus, the 445-residue chain is POU domain, class 3, transcription factor 2 (445 aa).

Disordered stretches follow at residues 63 to 173 (TALS…WRSA), 203 to 269 (LGAG…TPTS), 336 to 361 (EADS…KKRT), and 411 to 445 (EKRM…TPVQ). Residues 68–90 (GGSGGGGGGGGGGGGGGGGGGDG) are compositionally biased toward gly residues. Residues 125 to 151 (QQQHQQQQQQQQQQQQQQQQQQQQQQQ) show a composition bias toward low complexity. The span at 217–226 (LRDAHDEPHH) shows a compositional bias: basic and acidic residues. Basic residues predominate over residues 227-237 (ADHHPHPHSHP). Residues 239-253 (QQPPPPPPPQGPPGH) are compositionally biased toward pro residues. Positions 264–338 (EDTPTSDDLE…LLNKWLEEAD (75 aa)) constitute a POU-specific domain. S343 bears the Phosphoserine mark. Positions 356–415 (KRKKRTSIEVSVKGALESHFLKCPKPSAQEITSLADSLQLEKEVVRVWFCNRRQKEKRMT) form a DNA-binding region, homeobox.

It belongs to the POU transcription factor family. Class-3 subfamily. Interacts with PQBP1. Interaction with ISL1. In terms of tissue distribution, expressed specifically at high levels in the brain.

It is found in the nucleus. Its function is as follows. Transcription factor that plays a key role in neuronal differentiation. Binds preferentially to the recognition sequence which consists of two distinct half-sites, ('GCAT') and ('TAAT'), separated by a non-conserved spacer region of 0, 2, or 3 nucleotides. Acts as a transcriptional activator when binding cooperatively with SOX4, SOX11, or SOX12 to gene promoters. The combination of three transcription factors, ASCL1, POU3F2/BRN2 and MYT1L, is sufficient to reprogram fibroblasts and other somatic cells into induced neuronal (iN) cells in vitro. Acts downstream of ASCL1, accessing chromatin that has been opened by ASCL1, and promotes transcription of neuronal genes. This chain is POU domain, class 3, transcription factor 2 (Pou3f2), found in Rattus norvegicus (Rat).